The chain runs to 1566 residues: Arginine-glutamic acid dipeptide repeats protein (1566 aa).

The segment covering 1 to 36 (MTADKDKDKDKEKDRDRDRDREREKRDKARESENSR) has biased composition (basic and acidic residues). The interval 1-90 (MTADKDKDKD…KKKSRYERTD (90 aa)) is disordered. Ser53 and Ser56 each carry phosphoserine. Basic residues predominate over residues 74 to 85 (KNKKKPPKKKSR). The BAH domain occupies 103–283 (VVYRPGDCVY…PETRRLNSTQ (181 aa)). Thr120 carries the post-translational modification Phosphothreonine. Residues Ser142 and Ser304 each carry the phosphoserine modification. The ELM2 domain occupies 284 to 387 (GEIRVGPSHQ…KALQRLVKKP (104 aa)). An SANT domain is found at 391-443 (LIEKCWTEDEVKRFVKGLRQYGKNFFRIRKELLPNKETGELITFYYYWKKTPE). Residues 464 to 495 (TRTASTPVNTPSRPPSSEFLDLSSASEDDFDS) are disordered. Positions 465 to 474 (RTASTPVNTP) are enriched in polar residues. Over residues 479 to 488 (SSEFLDLSSA) the composition is skewed to low complexity. The segment at 507 to 532 (CRHCFTTTSKDWHHGGRENILLCTDC) adopts a GATA-type zinc-finger fold. The segment at 542–1133 (LPPIEKPVDP…PSHASQSARF (592 aa)) is disordered. Lys560 participates in a covalent cross-link: Glycyl lysine isopeptide (Lys-Gly) (interchain with G-Cter in SUMO2). Phosphoserine is present on residues Ser594, Ser600, and Ser613. The span at 609-623 (SGRNSPSAASTSSND) shows a compositional bias: low complexity. Over residues 624–640 (SKAETVKKSAKKVKEEA) the composition is skewed to basic and acidic residues. Lys637 participates in a covalent cross-link: Glycyl lysine isopeptide (Lys-Gly) (interchain with G-Cter in SUMO2). Phosphoserine occurs at positions 642, 656, 675, and 679. Over residues 652–673 (EKVASDTEEADRTSSKKTKTQE) the composition is skewed to basic and acidic residues. A compositionally biased stretch (basic and acidic residues) spans 688–708 (SDSRSVNDEGSSDPKDIDQDN). Residues 709-720 (RSTSPSIPSPQD) are compositionally biased toward polar residues. Residues 726-751 (DSSAQQQMLQAQPPALQAPTGVTPAP) show a composition bias toward low complexity. The span at 752–767 (SSAPPGTPQLPTPGPT) shows a compositional bias: pro residues. Residues 778 to 796 (SPTASQAPNQPQAPTAPVP) are compositionally biased toward low complexity. Positions 809–827 (QRPPSPHPPPHPSPHPPLQ) are enriched in pro residues. A compositionally biased stretch (polar residues) spans 829–840 (LTGSAGQPSAPS). Composition is skewed to low complexity over residues 843-865 (QPPLHGQGPPGPHSLQAGPLLQH) and 897-913 (SLQLPASQSALQSQQPP). Over residues 914 to 940 (REQPLPPAPLAMPHIKPPPTTPIPQLP) the composition is skewed to pro residues. Positions 970–980 (KPLSSLSTHHP) are enriched in low complexity. The span at 1030-1052 (PQPPFAQHPFVPGGPPPITPPTC) shows a compositional bias: pro residues. Low complexity predominate over residues 1053-1085 (PSTSTPPAGPGTSAQPPCSGAAASGGSIAGGSS). A phosphoserine mark is found at Ser1106, Ser1113, and Ser1115. Over residues 1106-1117 (SPPPPPRSPSPE) the composition is skewed to pro residues. A Phosphothreonine modification is found at Thr1119. Residues 1156 to 1211 (GSKLAKKREEAIEKAKREAEQKAREEREREKEKEKEREREREREREAERAAKASSS) are a coiled coil. Lys1158 is subject to N6-acetyllysine. The segment covering 1162 to 1206 (KREEAIEKAKREAEQKAREEREREKEKEKEREREREREREAERAA) has biased composition (basic and acidic residues). The segment at 1162 to 1246 (KREEAIEKAK…TTIAAVPPYI (85 aa)) is disordered. A Phosphotyrosine modification is found at Tyr1259. Position 1266 is a phosphoserine (Ser1266).

Interacts with HDAC1. Interacts with ATN1. Interaction with ATN1 is improved when the poly-Gln region of ATN1 is extended. Interacts with FAT1. As to expression, widely expressed. Expressed in tumor cell lines.

It is found in the nucleus. Its function is as follows. Plays a role as a transcriptional repressor during development. May play a role in the control of cell survival. Overexpression of RERE recruits BAX to the nucleus particularly to POD and triggers caspase-3 activation, leading to cell death. This is Arginine-glutamic acid dipeptide repeats protein (RERE) from Homo sapiens (Human).